A 146-amino-acid polypeptide reads, in one-letter code: Hemoglobin subunit beta (146 aa).

The residue at position 1 (valine 1) is an N-acetylvaline. The region spanning 2-146 is the Globin domain; it reads HLTPEEKNAV…VANALAHKYH (145 aa). Phosphothreonine is present on threonine 12. The residue at position 44 (serine 44) is a Phosphoserine. Position 59 is an N6-acetyllysine (lysine 59). Histidine 63 contributes to the heme b binding site. The residue at position 82 (lysine 82) is an N6-acetyllysine. Heme b is bound at residue histidine 92. Cysteine 93 carries the S-nitrosocysteine modification. Residue lysine 144 is modified to N6-acetyllysine.

The protein belongs to the globin family. Heterotetramer of two alpha chains and two beta chains. Red blood cells.

Functionally, involved in oxygen transport from the lung to the various peripheral tissues. The sequence is that of Hemoglobin subunit beta (HBB) from Papio cynocephalus (Yellow baboon).